An 859-amino-acid chain; its full sequence is ATP-dependent DNA helicase PIF1 (859 aa).

The N-terminal 45 residues, 1–45 (MPKWIRSTLNHIIPRRPFICSFNSFLLLKNVSHAKLSFSMSSRGF), are a transit peptide targeting the mitochondrion. Ser-70 and Ser-72 each carry phosphoserine. The span at 142–157 (NSFDQSSQKKSRSTGF) shows a compositional bias: polar residues. Residues 142–183 (NSFDQSSQKKSRSTGFKNPLRPALKKESSFDELQNSSISQER) are disordered. Ser-169 is subject to Phosphoserine. Residues 172 to 182 (DELQNSSISQE) are compositionally biased toward polar residues. Residue 258–265 (GSAGTGKS) coordinates ATP. The residue at position 584 (Ser-584) is a Phosphoserine. A DNA-binding region spans residues 727 to 746 (QAYVALSRAVSREGLQVLNF). The tract at residues 782–859 (KRKLDYAPGP…GQDTEDHILE (78 aa)) is disordered. Over residues 800 to 809 (KSNSPAPISA) the composition is skewed to low complexity. Residues 844–859 (VSDEPRGQDTEDHILE) show a composition bias toward basic and acidic residues.

Belongs to the helicase family. PIF1 subfamily. As to quaternary structure, monomer in solution. DNA binding induces dimerization. Associates with mitochondrial and telomeric DNA. Binding to mtDNA is non-specific and the protein seems to coat the entire mtDNA molecule. Binds to the telomerase RNA TLC1. Interacts with the mitochondrial single-strand DNA-binding protein RIM1. It depends on Mg(2+) as a cofactor. Mn(2+) serves as cofactor. Post-translationally, phosphorylated. Undergoes RAD53-dependent phosphorylation in response to loss of mtDNA.

The protein resides in the nucleus. The protein localises to the nucleolus. Its subcellular location is the mitochondrion inner membrane. The catalysed reaction is Couples ATP hydrolysis with the unwinding of duplex DNA at the replication fork by translocating in the 5'-3' direction. This creates two antiparallel DNA single strands (ssDNA). The leading ssDNA polymer is the template for DNA polymerase III holoenzyme which synthesizes a continuous strand.. It carries out the reaction ATP + H2O = ADP + phosphate + H(+). DNA-dependent ATPase and 5'-3' DNA helicase required for the maintenance of both mitochondrial and nuclear genome stability. Efficiently unwinds G-quadruplex (G4) DNA structures and forked RNA-DNA hybrids. Appears to move along DNA in single nucleotide or base pair steps, powered by hydrolysis of 1 molecule of ATP. Processes at an unwinding rate of about 75 bp/s. Resolves G4 structures, preventing replication pausing and double-strand breaks (DSBs) at G4 motifs. Involved in the maintenance of telomeric DNA. Inhibits telomere elongation, de novo telomere formation and telomere addition to DSBs via catalytic inhibition of telomerase. Reduces the processivity of telomerase by displacing active telomerase from DNA ends. Releases telomerase by unwinding the short telomerase RNA/telomeric DNA hybrid that is the intermediate in the telomerase reaction. Involved in the maintenance of ribosomal (rDNA). Required for efficient fork arrest at the replication fork barrier within rDNA. Involved in the maintenance of mitochondrial (mtDNA). Required to maintain mtDNA under conditions that introduce dsDNA breaks in mtDNA, either preventing or repairing dsDNA breaks. May inhibit replication progression to allow time for repair. May have a general role in chromosomal replication by affecting Okazaki fragment maturation. May have a role in conjunction with DNA2 helicase/nuclease in 5'-flap extension during Okazaki fragment processing. This Saccharomyces cerevisiae (strain YJM789) (Baker's yeast) protein is ATP-dependent DNA helicase PIF1.